The primary structure comprises 309 residues: Palmitoyltransferase ZDHHC19 (309 aa).

Transmembrane regions (helical) follow at residues 29–49 (LFAA…FAFP) and 59–79 (WAFP…LVSL). A DHHC domain is found at 112 to 162 (QWCPKCCFHRPPRTYHCPWCNICVEDFDHHCKWVNNCIGHRNFRFFMLLVL). C142 acts as the S-palmitoyl cysteine intermediate in catalysis. 2 helical membrane passes run 160 to 180 (LVLS…IFLV) and 193 to 213 (IAIV…LLLL). Residues 280-294 (LHPPMSPSALNPPAP) show a composition bias toward pro residues. The disordered stretch occupies residues 280–309 (LHPPMSPSALNPPAPTSGSLQSREGTPGAW).

Belongs to the DHHC palmitoyltransferase family.

The protein resides in the golgi apparatus membrane. It is found in the cytoplasm. It localises to the perinuclear region. It catalyses the reaction L-cysteinyl-[protein] + hexadecanoyl-CoA = S-hexadecanoyl-L-cysteinyl-[protein] + CoA. In terms of biological role, palmitoyltransferase that mediates palmitoylation oproteins, such as RRAS and SQSTM1. Catalyzes palmitoylation of RRAS, leading to increased cell viability. Acts as a positive regulator of autophagy by mediating palmitoylation of SQSTM1, promoting affinity between SQSTM1 and ATG8 proteins and recruitment of ubiquitinated cargo proteins to autophagosomes. Functionally, (Microbial infection) Promotes Chikungunya virus (CHIKV) replication by mediating viral nsp1 palmitoylation. The chain is Palmitoyltransferase ZDHHC19 from Homo sapiens (Human).